The chain runs to 143 residues: Transcriptional regulator MraZ (143 aa).

SpoVT-AbrB domains follow at residues 5–47 (EYQH…PQEE) and 76–119 (ASEC…SKSE).

This sequence belongs to the MraZ family. In terms of assembly, forms oligomers.

Its subcellular location is the cytoplasm. It localises to the nucleoid. The protein is Transcriptional regulator MraZ of Listeria monocytogenes serotype 4b (strain CLIP80459).